A 588-amino-acid chain; its full sequence is Vesicular glutamate transporter 3 (588 aa).

The Cytoplasmic segment spans residues 1–76 (MPFNAFDTFK…CSCCGIPKRY (76 aa)). The helical transmembrane segment at 77–97 (IIAVMSGLGFCISFGIRCNLG) threads the bilayer. At 98-130 (VAIVEMVNNSTVYVDGKPEIQTAQFNWDPETVG) the chain is on the vesicular side. Residue Asn-106 is glycosylated (N-linked (GlcNAc...) asparagine). The helical transmembrane segment at 131-151 (LIHGSFFWGYIVTQIPGGFIS) threads the bilayer. Residues 152 to 153 (NK) are Cytoplasmic-facing. A helical transmembrane segment spans residues 154–174 (FAANRVFGAAIFLTSTLNMFI). Residues 175 to 182 (PSAARVHY) lie on the Vesicular side of the membrane. A helical transmembrane segment spans residues 183-203 (GCVMCVRILQGLVEGVTYPAC). Topologically, residues 204–221 (HGMWSKWAPPLERSRLAT) are cytoplasmic. A helical transmembrane segment spans residues 222–242 (TSFCGSYAGAVVAMPLAGVLV). Residues 243–249 (QYIGWAS) are Vesicular-facing. The chain crosses the membrane as a helical span at residues 250 to 270 (VFYIYGMFGIIWYMFWLLQAY). The Cytoplasmic portion of the chain corresponds to 271–314 (ECPAVHPTISNEERTYIETSIGEGANLASLSKFNTPWRRFFTSL). The helical transmembrane segment at 315–335 (PVYAIIVANFCRSWTFYLLLI) threads the bilayer. The Vesicular segment spans residues 336-353 (SQPAYFEEVFGFAISKVG). The helical transmembrane segment at 354-374 (LLSAVPHMVMTIVVPIGGQLA) threads the bilayer. Residues 375 to 390 (DYLRSRKILTTTAVRK) are Cytoplasmic-facing. A helical transmembrane segment spans residues 391 to 411 (IMNCGGFGMEATLLLVVGFSH). Over 412 to 413 (TK) the chain is Vesicular. The chain crosses the membrane as a helical span at residues 414-434 (GVAISFLVLAVGFSGFAISGF). Over 435 to 447 (NVNHLDIAPRYAS) the chain is Cytoplasmic. The helical transmembrane segment at 448–468 (ILMGISNGVGTLSGMVCPLIV) threads the bilayer. Residues 469–481 (GAMTKHKTREEWQ) are Vesicular-facing. A helical membrane pass occupies residues 482–502 (NVFLIAALVHYSGVIFYGVFA). The Cytoplasmic segment spans residues 503-585 (SGEKQDWADP…LSYQNEEDFS (83 aa)). Positions 539 to 588 (FVSPRKKMSYGATTQNCEVQKTDRRQQRESAFEGEEPLSYQNEEDFSETS) are disordered. Over residues 558-569 (QKTDRRQQRESA) the composition is skewed to basic and acidic residues. The segment covering 570–588 (FEGEEPLSYQNEEDFSETS) has biased composition (acidic residues).

Belongs to the major facilitator superfamily. Sodium/anion cotransporter family. VGLUT subfamily. As to expression, expressed in brain, kidney and liver. Expressed within the amygdala, brainstem, cerberal cortex, dorsal root ganglia, dorsal spinal cord, hippocampus, hypothalamus, retina, striatum and ventral spinal cord. Expressed within neurons of the caudate-putamen, olfactory tubercle, nucleus accumbens, hippocampus, interpeduncular nucleus and dorsal and medial raphe nuclei. Expressed in inner hair cells of the ear. Expressed at synaptic terminals within the lateral superior olive (LSO), a nucleus of the mammalian sound localization system, and in the medial nucleus of the trapezoid body (MNTB), which provides inhibitory input to the LSO.

It localises to the cytoplasmic vesicle. Its subcellular location is the secretory vesicle. The protein localises to the synaptic vesicle membrane. The protein resides in the cell membrane. It is found in the synapse. It localises to the synaptosome. The catalysed reaction is L-glutamate(out) = L-glutamate(in). It carries out the reaction chloride(in) = chloride(out). The enzyme catalyses 3 Na(+)(out) + phosphate(out) = 3 Na(+)(in) + phosphate(in). Its activity is regulated as follows. The L-glutamate uniporter activity exhibits a biphasic dependence on chloride concentration. Chloride channel activity is allosterically activated by lumenal H(+) and Cl(-) leading to synaptic vesicles acidification. The glutamate transport activity is allosterically activated by lumenal H(+) and Cl(-), preventing non-vesicular L-glutamate release. Its function is as follows. Multifunctional transporter that transports L-glutamate as well as multiple ions such as chloride, sodium and phosphate. At the synaptic vesicle membrane, mainly functions as an uniporter that mediates the uptake of L-glutamate into synaptic vesicles at presynaptic nerve terminals of excitatory neural cells. The L-glutamate uniporter activity is electrogenic and is driven by the proton electrochemical gradient, mainly by the electrical gradient established by the vacuolar H(+)-ATPase across the synaptic vesicle membrane. In addition, functions as a chloride channel that allows a chloride permeation through the synaptic vesicle membrane that affects the proton electrochemical gradient and promotes synaptic vesicles acidification. At the plasma membrane, following exocytosis, functions as a symporter of Na(+) and phosphate from the extracellular space to the cytoplasm allowing synaptic phosphate homeostasis regulation. The symporter activity is electrogenic. Moreover, operates synergistically with SLC18A3/VACHT under a constant H(+) gradient, thereby allowing striatal vesicular acetylcholine uptake. The polypeptide is Vesicular glutamate transporter 3 (Rattus norvegicus (Rat)).